The sequence spans 393 residues: MIETDILVVGAGPSGSLAAKEAALHGADVILIDRKSEIGSPKRCAEGVSKDGLAQLGIKPDPRWIARDLYGVRLVSPNNTSVWMDNNTIKIPEAGYILERKVFDKHMAMDAARAGAKIMIKTNATSLKRVDDGIIVSTNHMGKDIDIHAKIVIAADGPESRIGRWAGLECNTEFKYMESCIQFEMAGVNMENNRDIALFFGSVAPGGYVWIFPKGDDIANVGIGVLKNKTNKTAYEHLMEFIKTCPETKDAQPVEINVGGDPVGGIIKDRIGDNILVVGDAAGFVNSLTGGGINSALESGVYAGIVAAQAIKDGDYSKNNLKEYVSLTDEHIGKHYKKYNKAKEYLLSLEDEELDEIAEEFAKADFEEVNPRTLIKMLIKVSPKALVKLGKLF.

The FAD site is built by Asp-33, Cys-44, Ala-45, Gly-47, Arg-100, Ala-124, Asp-280, Gly-292, and Ile-293.

It belongs to the geranylgeranyl reductase family. DGGGPL reductase subfamily. Requires FAD as cofactor.

The catalysed reaction is a 2,3-bis-O-phytanyl-sn-glycerol 1-phospholipid + 8 A = a 2,3-bis-O-(geranylgeranyl)-sn-glycerol 1-phospholipid + 8 AH2. The enzyme catalyses 2,3-bis-O-(phytanyl)-sn-glycerol 1-phosphate + 8 A = 2,3-bis-O-(geranylgeranyl)-sn-glycerol 1-phosphate + 8 AH2. It carries out the reaction CDP-2,3-bis-O-(geranylgeranyl)-sn-glycerol + 8 AH2 = CDP-2,3-bis-O-(phytanyl)-sn-glycerol + 8 A. It catalyses the reaction archaetidylserine + 8 AH2 = 2,3-bis-O-phytanyl-sn-glycero-3-phospho-L-serine + 8 A. Its pathway is membrane lipid metabolism; glycerophospholipid metabolism. Is involved in the reduction of 2,3-digeranylgeranylglycerophospholipids (unsaturated archaeols) into 2,3-diphytanylglycerophospholipids (saturated archaeols) in the biosynthesis of archaeal membrane lipids. Catalyzes the formation of archaetidic acid (2,3-di-O-phytanyl-sn-glyceryl phosphate) from 2,3-di-O-geranylgeranylglyceryl phosphate (DGGGP) via the hydrogenation of each double bond of the isoprenoid chains. Is also probably able to reduce double bonds of geranyl groups in CDP-2,3-bis-O-(geranylgeranyl)-sn-glycerol and archaetidylserine, thus acting at various stages in the biosynthesis of archaeal membrane lipids. The polypeptide is Digeranylgeranylglycerophospholipid reductase 2 (Methanosphaera stadtmanae (strain ATCC 43021 / DSM 3091 / JCM 11832 / MCB-3)).